Reading from the N-terminus, the 207-residue chain is Microtubule-associated protein Jupiter (207 aa).

The residue at position 30 (serine 30) is a Phosphoserine. Phosphothreonine occurs at positions 41 and 102. A phosphoserine mark is found at serine 111, serine 138, and serine 149. 2 disordered regions span residues 129–174 (KGKY…YKAG) and 188–207 (GNQV…SGLW). Positions 136–149 (SGSVSSASSSVSSS) are enriched in low complexity. A compositionally biased stretch (polar residues) spans 150-164 (TENLKINVGNRSDGN).

This sequence belongs to the MAP Jupiter family.

The protein resides in the nucleus. The protein localises to the cytoplasm. Its subcellular location is the cytoskeleton. It localises to the spindle. Its function is as follows. Binds to all microtubule populations. The polypeptide is Microtubule-associated protein Jupiter (Drosophila grimshawi (Hawaiian fruit fly)).